An 853-amino-acid polypeptide reads, in one-letter code: G-type lectin S-receptor-like serine/threonine-protein kinase SRK (853 aa).

Positions 1–31 are cleaved as a signal peptide; it reads MRGELPNKHHSYTFFVFLFFFLILFPDLSIS. Residues 32-441 lie on the Extracellular side of the membrane; that stretch reads VNTLSATESL…FGERRTIRGK (410 aa). The Bulb-type lectin domain maps to 34–154; it reads TLSATESLTI…KINESDEFLW (121 aa). N-linked (GlcNAc...) asparagine glycosylation is found at Asn-46, Asn-120, Asn-147, and Asn-243. The region spanning 293–329 is the EGF-like; atypical domain; that stretch reads PKDTCDLYGICGPYAYCDMSTSPTCNCIKGFQPLSPQ. 4 disulfide bridges follow: Cys-297–Cys-309, Cys-303–Cys-317, Cys-378–Cys-403, and Cys-382–Cys-388. The 81-residue stretch at 348 to 428 folds into the PAN domain; it reads CGEDRFFRLM…DGQDLFVRLA (81 aa). N-linked (GlcNAc...) asparagine glycosylation is present at Asn-387. Residues 442–462 traverse the membrane as a helical segment; that stretch reads IIGLIIGISLMLVLSFIIYCF. Over 463–853 the chain is Cytoplasmic; the sequence is WKKKQKRARA…QITVSVINAR (391 aa). A Protein kinase domain is found at 524–802; sequence FSDSNILGRG…PKMSSVVLML (279 aa). ATP is bound by residues 530–538 and Lys-552; that span reads LGRGGFGIV. At Ser-558 the chain carries Phosphoserine. Positions 613-631 are caM-binding; the sequence is TQSSNKLNWQTRFSIINGI. Residue Asp-650 is the Proton acceptor of the active site. Phosphoserine occurs at positions 654 and 667. Thr-684 carries the phosphothreonine modification. Residues 807 to 838 are disordered; sequence GEIPQPKRPGYCVGRSSLDTADSSSSTKRDSE. Over residues 822 to 832 the composition is skewed to low complexity; the sequence is SSLDTADSSSS. Ser-831 is modified (phosphoserine).

It belongs to the protein kinase superfamily. Ser/Thr protein kinase family.

Its subcellular location is the cell membrane. It catalyses the reaction L-seryl-[protein] + ATP = O-phospho-L-seryl-[protein] + ADP + H(+). The catalysed reaction is L-threonyl-[protein] + ATP = O-phospho-L-threonyl-[protein] + ADP + H(+). Female specificity determinant of self-incompatibility. The chain is G-type lectin S-receptor-like serine/threonine-protein kinase SRK (SRK) from Arabidopsis thaliana (Mouse-ear cress).